Reading from the N-terminus, the 109-residue chain is Sulredoxin (109 aa).

Residues 3–107 (WKRTISAKAL…IRDNNGWIEV (105 aa)) enclose the Rieske domain. [2Fe-2S] cluster contacts are provided by Cys-43, His-45, Cys-62, and His-65.

In terms of assembly, homooligomeric. [2Fe-2S] cluster serves as cofactor.

It localises to the cytoplasm. Its function is as follows. Not yet known. The chain is Sulredoxin (sdx) from Sulfurisphaera tokodaii (strain DSM 16993 / JCM 10545 / NBRC 100140 / 7) (Sulfolobus tokodaii).